Here is a 215-residue protein sequence, read N- to C-terminus: Pyridoxine/pyridoxamine 5'-phosphate oxidase (215 aa).

Substrate contacts are provided by residues 11-14 (RRDY) and Lys-69. FMN is bound by residues 64 to 69 (RVVLLK), 79 to 80 (YT), Lys-86, and Gln-108. Substrate contacts are provided by Tyr-126, Arg-130, and Ser-134. FMN-binding positions include 143–144 (QS) and Trp-188. 194–196 (RLH) serves as a coordination point for substrate. Residue Arg-198 coordinates FMN.

This sequence belongs to the pyridoxamine 5'-phosphate oxidase family. In terms of assembly, homodimer. Requires FMN as cofactor.

It catalyses the reaction pyridoxamine 5'-phosphate + O2 + H2O = pyridoxal 5'-phosphate + H2O2 + NH4(+). The catalysed reaction is pyridoxine 5'-phosphate + O2 = pyridoxal 5'-phosphate + H2O2. Its pathway is cofactor metabolism; pyridoxal 5'-phosphate salvage; pyridoxal 5'-phosphate from pyridoxamine 5'-phosphate: step 1/1. The protein operates within cofactor metabolism; pyridoxal 5'-phosphate salvage; pyridoxal 5'-phosphate from pyridoxine 5'-phosphate: step 1/1. Functionally, catalyzes the oxidation of either pyridoxine 5'-phosphate (PNP) or pyridoxamine 5'-phosphate (PMP) into pyridoxal 5'-phosphate (PLP). The polypeptide is Pyridoxine/pyridoxamine 5'-phosphate oxidase (Legionella pneumophila (strain Lens)).